A 150-amino-acid polypeptide reads, in one-letter code: D-aminoacyl-tRNA deacylase (150 aa).

Residues 138–139 carry the Gly-cisPro motif, important for rejection of L-amino acids motif; sequence GP.

The protein belongs to the DTD family. As to quaternary structure, homodimer.

The protein resides in the cytoplasm. The enzyme catalyses glycyl-tRNA(Ala) + H2O = tRNA(Ala) + glycine + H(+). It catalyses the reaction a D-aminoacyl-tRNA + H2O = a tRNA + a D-alpha-amino acid + H(+). In terms of biological role, an aminoacyl-tRNA editing enzyme that deacylates mischarged D-aminoacyl-tRNAs. Also deacylates mischarged glycyl-tRNA(Ala), protecting cells against glycine mischarging by AlaRS. Acts via tRNA-based rather than protein-based catalysis; rejects L-amino acids rather than detecting D-amino acids in the active site. By recycling D-aminoacyl-tRNA to D-amino acids and free tRNA molecules, this enzyme counteracts the toxicity associated with the formation of D-aminoacyl-tRNA entities in vivo and helps enforce protein L-homochirality. The polypeptide is D-aminoacyl-tRNA deacylase (Porphyromonas gingivalis (strain ATCC 33277 / DSM 20709 / CIP 103683 / JCM 12257 / NCTC 11834 / 2561)).